Consider the following 260-residue polypeptide: Thymidylate synthase (260 aa).

Arg21 serves as a coordination point for dUMP. His51 provides a ligand contact to (6R)-5,10-methylene-5,6,7,8-tetrahydrofolate. 122 to 123 (RR) serves as a coordination point for dUMP. Cys142 functions as the Nucleophile in the catalytic mechanism. Residues 162–165 (RSAD), Asn173, and 203–205 (HLY) contribute to the dUMP site. (6R)-5,10-methylene-5,6,7,8-tetrahydrofolate is bound at residue Asp165. Ala259 is a binding site for (6R)-5,10-methylene-5,6,7,8-tetrahydrofolate.

The protein belongs to the thymidylate synthase family. Bacterial-type ThyA subfamily. Homodimer.

It is found in the cytoplasm. The enzyme catalyses dUMP + (6R)-5,10-methylene-5,6,7,8-tetrahydrofolate = 7,8-dihydrofolate + dTMP. The protein operates within pyrimidine metabolism; dTTP biosynthesis. In terms of biological role, catalyzes the reductive methylation of 2'-deoxyuridine-5'-monophosphate (dUMP) to 2'-deoxythymidine-5'-monophosphate (dTMP) while utilizing 5,10-methylenetetrahydrofolate (mTHF) as the methyl donor and reductant in the reaction, yielding dihydrofolate (DHF) as a by-product. This enzymatic reaction provides an intracellular de novo source of dTMP, an essential precursor for DNA biosynthesis. This is Thymidylate synthase from Methylococcus capsulatus (strain ATCC 33009 / NCIMB 11132 / Bath).